The following is a 765-amino-acid chain: E3 ubiquitin-protein ligase SlrP (765 aa).

Residues 1 to 453 form an interaction with target proteins region; the sequence is MFNITNIQST…YQGPRVLFAM (453 aa). LRR repeat units follow at residues 200-219, 221-242, 243-262, 263-284, 285-305, 306-325, 326-346, 347-368, 369-389, and 390-410; these read QITT…ENLQ, NIKT…LPDT, IQEM…RLPS, ALQS…LPEE, LRYL…LPSE, ITHL…TLPP, GLKT…SLPP, ELQV…LPPT, ITTL…LPAA, and LQIM…LPHF. The tract at residues 454–461 is linker; it reads GDFSIVRV. Positions 462-765 are E3 ubiquitin-protein ligase catalytic domain; that stretch reads TRPLHQAVQG…VSSLMSAYWR (304 aa). An NEL domain is found at 464-758; that stretch reads PLHQAVQGWL…NILLKKEVSS (295 aa). The active-site Glycyl thioester intermediate is the cysteine 546.

Belongs to the LRR-containing bacterial E3 ligase family. As to quaternary structure, interacts with host TXN. In terms of processing, ubiquitinated in the presence of host E1 ubiquitin-activating enzyme, E2 ubiquitin-conjugating enzyme and ubiquitin.

The protein localises to the secreted. The protein resides in the host cytoplasm. The enzyme catalyses S-ubiquitinyl-[E2 ubiquitin-conjugating enzyme]-L-cysteine + [acceptor protein]-L-lysine = [E2 ubiquitin-conjugating enzyme]-L-cysteine + N(6)-ubiquitinyl-[acceptor protein]-L-lysine.. In terms of biological role, effector proteins function to alter host cell physiology and promote bacterial survival in host tissues. This protein is an E3 ubiquitin ligase that interferes with host's ubiquitination pathway. Can ubiquitinate both ubiquitin and host TXN (thioredoxin). Leads to significant decrease of thioredoxin activity and increase of host cell death. In Salmonella typhimurium (strain 14028s / SGSC 2262), this protein is E3 ubiquitin-protein ligase SlrP (slrP).